A 111-amino-acid polypeptide reads, in one-letter code: Probable 4-amino-4-deoxy-L-arabinose-phosphoundecaprenol flippase subunit ArnE (111 aa).

Transmembrane regions (helical) follow at residues 38–58 (LWLG…LLVL), 61–81 (LPVG…TLAA), and 91–111 (PRHW…GSAA). The 70-residue stretch at 40-109 (LGLALICMGA…IISGIIILGS (70 aa)) folds into the EamA domain.

It belongs to the ArnE family. Heterodimer of ArnE and ArnF.

It is found in the cell inner membrane. Its pathway is bacterial outer membrane biogenesis; lipopolysaccharide biosynthesis. Its function is as follows. Translocates 4-amino-4-deoxy-L-arabinose-phosphoundecaprenol (alpha-L-Ara4N-phosphoundecaprenol) from the cytoplasmic to the periplasmic side of the inner membrane. This is Probable 4-amino-4-deoxy-L-arabinose-phosphoundecaprenol flippase subunit ArnE from Salmonella paratyphi B (strain ATCC BAA-1250 / SPB7).